A 281-amino-acid chain; its full sequence is uncharacterized protein (281 aa).

An N-terminal signal peptide occupies residues 1–23 (MKLYRSLKAALLPGICTSILLAS). A lipid anchor (N-palmitoyl cysteine) is attached at C24. The S-diacylglycerol cysteine moiety is linked to residue C24. Positions 145–165 (HHDHNHMHNHEHEHEEHHDEE) are disordered. The span at 150-161 (HMHNHEHEHEEH) shows a compositional bias: basic and acidic residues.

It localises to the cell membrane. This is an uncharacterized protein from Mycoplasma genitalium (strain ATCC 33530 / DSM 19775 / NCTC 10195 / G37) (Mycoplasmoides genitalium).